A 272-amino-acid polypeptide reads, in one-letter code: MKTVSLLIDMKQKQTKISMVTAYDFPSAKQVEAAGIDMILVGDSLGMTVLGYESTVQVTLADMIHHGRAVRRGAPNTFVVVDMPIGAVGISMTQDLNHALKLYQETNANAIKAEGAHITPFIEKATAIGIPVVAHLGLTPQSVGVMGYKLQGATKEAAEQLILDAKNVEQAGAVALVLEAIPNDLAEEISKHLTIPVIGIGAGKGTDGQVLVYHDMLNYGVEHKAKFVKQFADFSVGVDGLKQYDQEVKSGAFPSEEYTYKKKIMNEVNNND.

Asp-43 and Asp-82 together coordinate Mg(2+). 3-methyl-2-oxobutanoate contacts are provided by residues 43–44, Asp-82, and Lys-112; that span reads DS. Residue Glu-114 participates in Mg(2+) binding. The Proton acceptor role is filled by Glu-179.

The protein belongs to the PanB family. Homodecamer; pentamer of dimers. Mg(2+) serves as cofactor.

It is found in the cytoplasm. It carries out the reaction 3-methyl-2-oxobutanoate + (6R)-5,10-methylene-5,6,7,8-tetrahydrofolate + H2O = 2-dehydropantoate + (6S)-5,6,7,8-tetrahydrofolate. It functions in the pathway cofactor biosynthesis; (R)-pantothenate biosynthesis; (R)-pantoate from 3-methyl-2-oxobutanoate: step 1/2. Functionally, catalyzes the reversible reaction in which hydroxymethyl group from 5,10-methylenetetrahydrofolate is transferred onto alpha-ketoisovalerate to form ketopantoate. The sequence is that of 3-methyl-2-oxobutanoate hydroxymethyltransferase from Staphylococcus aureus (strain Mu3 / ATCC 700698).